Here is a 535-residue protein sequence, read N- to C-terminus: MYQRLKEINFRKPLELEWNSIFLILGFFVLAAILIAWTQRPDEELLLERLKDLDLPIVGVGPNINVSESLEIGTQTYPNSPYVVPADRVPIVILPNSAINIIKSLPEAKISFEKEVYARHLAHLLLKKDQKIFSEPILNSIKQDLTRNISKTLDTLWDEVDYAFEKNIGTLPDDDDGWKNVSVYGKVLNVVALLSGRVFVGAPLCRDEEWIKATIAYTIILGVTVGMLWKRPWWQRKILAPLYFRTLVGVHKKAEELLKPLLEREAALDPSEWEKKAGEQNDGQLIRWLLSHTPQKGGKIDVKQLAHDQLTVSLAAIHTTSITISHLLYDLATYPEHVAPLRTELESVIADHKTAGGNGKLSKVELTKLWKMDSFIKESQRLNPPILVQMRRYLTSPLALPSGHILPSGTFCGVDAQMTNRTVPYYEASPITHQQTPFDTFDGFRFSKLRSVPGNENRYQFVTSSTESLNFGHGTHACPGRFFASNEIKIAFAEVLLKWDVRLKPGEGRPANLYTDTNVMPNMKGEVQMRRRELI.

The chain crosses the membrane as a helical span at residues 20–37 (SIFLILGFFVLAAILIAW). Residues N65, N148, N180, and N420 are each glycosylated (N-linked (GlcNAc...) asparagine). Residue C478 coordinates heme.

Belongs to the cytochrome P450 family. Requires heme as cofactor.

It localises to the membrane. The protein operates within polyketide biosynthesis. In terms of biological role, cytochrome P450 monooxygenase; part of the gene cluster B that mediates the biosynthesis of botcinic acid and its botcinin derivatives, acetate-derived polyketides that contribute to virulence when combined with the sesquiterpene botrydial. Botcinic acid and its derivatives have been shown to induce chlorosis and necrosis during host plant infection, but also have antifungal activities. Two polyketide synthases, BOA6 and BOA9, are involved in the biosynthesis of botcinins. BOA6 mediates the formation of the per-methylated tetraketide core by condensation of four units of malonyl-CoA with one unit of acetyl-CoA, which would be methylated in activated methylene groups to yield a bicyclic acid intermediate that could then either be converted to botrylactone derivatives or lose the starter acetate unit through a retro-Claisen type C-C bond cleavage to yield botcinin derivatives. The second polyketide synthase, BOA9, is probably required for the biosynthesis of the tetraketide side chain of botcinins. The methyltransferase (MT) domain within BOA6 is probably responsible for the incorporation of four methyl groups. The trans-enoyl reductase BOA5 might take over the enoyl reductase function of BOA6 that misses an ER domain. The monooxygenases BOA2, BOA3 and BOA4 might be involved in further hydroxylations at C4, C5 and C8, whereas BOA7, close to BOA9, could potentially be involved in the hydroxylation at C4 in the side chain of botcinins. The chain is Cytochrome P450 monooxygenase BOA7 from Botryotinia fuckeliana (strain B05.10) (Noble rot fungus).